The following is a 424-amino-acid chain: Elongation factor 1-alpha (424 aa).

In terms of domain architecture, tr-type G spans 5 to 223 (KPHLNLAFIG…NALKEPQKPV (219 aa)). The G1 stretch occupies residues 14-21 (GHVDHGKS). 14–21 (GHVDHGKS) lines the GTP pocket. A Mg(2+)-binding site is contributed by Ser21. Residues 70 to 74 (GVTID) form a G2 region. The segment at 91–94 (DCPG) is G3. GTP is bound by residues 91–95 (DCPGH) and 146–149 (NKMD). The interval 146-149 (NKMD) is G4. The tract at residues 187–189 (SAY) is G5.

This sequence belongs to the TRAFAC class translation factor GTPase superfamily. Classic translation factor GTPase family. EF-Tu/EF-1A subfamily.

The protein resides in the cytoplasm. It catalyses the reaction GTP + H2O = GDP + phosphate + H(+). Functionally, GTP hydrolase that promotes the GTP-dependent binding of aminoacyl-tRNA to the A-site of ribosomes during protein biosynthesis. The sequence is that of Elongation factor 1-alpha from Methanothrix thermoacetophila (strain DSM 6194 / JCM 14653 / NBRC 101360 / PT) (Methanosaeta thermophila).